Consider the following 238-residue polypeptide: MRPNNRENNQPRQIKITRNYTKHAEGSVLVEFGDTKVLCTATVEDAVPRFLKGQGQGWVTAEYGMLPRSTHSRMQREAAKGKQGGRTMEIQRLIARSLRAMVDLKALGERAITLDCDVIQADGGTRTASITGAAVALCDAINGLIENGTLKTNPIKGLVSAISVGIVDGQAVCDLEYVEDSAAETDMNVVMMEDGRMIEVQGTAEGEPFSHEELLTLLDLAKQGCNQIFIAQREALGL.

Residues Arg86 and 124–126 (GTR) contribute to the phosphate site.

The protein belongs to the RNase PH family. As to quaternary structure, homohexameric ring arranged as a trimer of dimers.

The enzyme catalyses tRNA(n+1) + phosphate = tRNA(n) + a ribonucleoside 5'-diphosphate. Its function is as follows. Phosphorolytic 3'-5' exoribonuclease that plays an important role in tRNA 3'-end maturation. Removes nucleotide residues following the 3'-CCA terminus of tRNAs; can also add nucleotides to the ends of RNA molecules by using nucleoside diphosphates as substrates, but this may not be physiologically important. Probably plays a role in initiation of 16S rRNA degradation (leading to ribosome degradation) during starvation. This is Ribonuclease PH from Haemophilus influenzae (strain 86-028NP).